Consider the following 664-residue polypeptide: Gametogenetin-binding protein 2 (664 aa).

2 disordered regions span residues 375 to 425 (QEKK…NTSE) and 447 to 476 (KKGL…QEGS). Positions 376-388 (EKKRQKKNRRKNK) are enriched in basic residues. Residues 452 to 475 (PHSNVSDCGYSSSLEGSEPGSQEG) are compositionally biased toward polar residues.

Its subcellular location is the cytoplasm. Its function is as follows. May be involved in spermatogenesis. The sequence is that of Gametogenetin-binding protein 2 (ggnbp2) from Xenopus laevis (African clawed frog).